The primary structure comprises 195 residues: Urease accessory protein UreG (195 aa).

Glycine 9–threonine 16 provides a ligand contact to GTP.

Belongs to the SIMIBI class G3E GTPase family. UreG subfamily. As to quaternary structure, homodimer. UreD, UreF and UreG form a complex that acts as a GTP-hydrolysis-dependent molecular chaperone, activating the urease apoprotein by helping to assemble the nickel containing metallocenter of UreC. The UreE protein probably delivers the nickel.

Its subcellular location is the cytoplasm. Functionally, facilitates the functional incorporation of the urease nickel metallocenter. This process requires GTP hydrolysis, probably effectuated by UreG. This Aliarcobacter butzleri (strain RM4018) (Arcobacter butzleri) protein is Urease accessory protein UreG.